Consider the following 445-residue polypeptide: Tripartite motif-containing protein 43B (445 aa).

The RING-type zinc-finger motif lies at 16–57 (CSICQGIFMNPVYLKCGHKFCEACLLLFQEDIKFPAYCPMCM). The B box-type zinc finger occupies 88 to 129 (SEEHKCVTHKAKKMIFCDKSKILLCHLCSDSQEHSGHTHCSI). Zn(2+) contacts are provided by Cys-93, His-96, Cys-115, and His-121. Residues 271–445 (RLRAHSIPGL…VRPFFSAVYT (175 aa)) enclose the B30.2/SPRY domain.

It belongs to the TRIM/RBCC family.

This is Tripartite motif-containing protein 43B from Mus musculus (Mouse).